The chain runs to 182 residues: UPF0587 protein YCR090C (182 aa).

C36, C39, C70, and C73 together coordinate Zn(2+).

Belongs to the UPF0587 family.

This is UPF0587 protein YCR090C from Saccharomyces cerevisiae (strain ATCC 204508 / S288c) (Baker's yeast).